Reading from the N-terminus, the 248-residue chain is Probable transcriptional regulatory protein Mnod_7401 (248 aa).

Belongs to the TACO1 family.

The protein resides in the cytoplasm. In Methylobacterium nodulans (strain LMG 21967 / CNCM I-2342 / ORS 2060), this protein is Probable transcriptional regulatory protein Mnod_7401.